The sequence spans 740 residues: Ion-translocating oxidoreductase complex subunit C (740 aa).

4Fe-4S ferredoxin-type domains lie at 369-397 (GEPQEEQSCIRCSACADACPADLLPQQLY) and 407-436 (KATTHNIADCIECGACAWVCPSNIPLVQYF). Cys377, Cys380, Cys383, Cys387, Cys416, Cys419, Cys422, and Cys426 together coordinate [4Fe-4S] cluster. Residues 602–717 (KLEQQQANAE…PEEQVDPRKA (116 aa)) are disordered. 2 stretches are compositionally biased toward low complexity: residues 605–615 (QQQANAEPEQQ) and 637–647 (QQQANAEPEQQ).

Belongs to the 4Fe4S bacterial-type ferredoxin family. RnfC subfamily. The complex is composed of six subunits: RsxA, RsxB, RsxC, RsxD, RsxE and RsxG. [4Fe-4S] cluster is required as a cofactor.

The protein resides in the cell inner membrane. Its function is as follows. Part of a membrane-bound complex that couples electron transfer with translocation of ions across the membrane. Required to maintain the reduced state of SoxR. This is Ion-translocating oxidoreductase complex subunit C from Escherichia coli (strain ATCC 8739 / DSM 1576 / NBRC 3972 / NCIMB 8545 / WDCM 00012 / Crooks).